The sequence spans 191 residues: Imidazoleglycerol-phosphate dehydratase (191 aa).

The protein belongs to the imidazoleglycerol-phosphate dehydratase family.

The protein localises to the cytoplasm. The enzyme catalyses D-erythro-1-(imidazol-4-yl)glycerol 3-phosphate = 3-(imidazol-4-yl)-2-oxopropyl phosphate + H2O. It participates in amino-acid biosynthesis; L-histidine biosynthesis; L-histidine from 5-phospho-alpha-D-ribose 1-diphosphate: step 6/9. This chain is Imidazoleglycerol-phosphate dehydratase, found in Methanosarcina barkeri (strain Fusaro / DSM 804).